Here is a 206-residue protein sequence, read N- to C-terminus: Orotate phosphoribosyltransferase (206 aa).

Residues R97, K98, K101, and N125–S133 contribute to the 5-phospho-alpha-D-ribose 1-diphosphate site. R157 is an orotate binding site.

The protein belongs to the purine/pyrimidine phosphoribosyltransferase family. PyrE subfamily. As to quaternary structure, homodimer. It depends on Mg(2+) as a cofactor.

It catalyses the reaction orotidine 5'-phosphate + diphosphate = orotate + 5-phospho-alpha-D-ribose 1-diphosphate. It participates in pyrimidine metabolism; UMP biosynthesis via de novo pathway; UMP from orotate: step 1/2. In terms of biological role, catalyzes the transfer of a ribosyl phosphate group from 5-phosphoribose 1-diphosphate to orotate, leading to the formation of orotidine monophosphate (OMP). This chain is Orotate phosphoribosyltransferase, found in Chlamydia felis (strain Fe/C-56) (Chlamydophila felis).